The following is a 282-amino-acid chain: uncharacterized protein (282 aa).

Residues 22 to 42 (YLFTLGSFVTMFFVLCISPVF) form a helical membrane-spanning segment.

It localises to the cell membrane. This is an uncharacterized protein from Bacillus anthracis.